A 367-amino-acid polypeptide reads, in one-letter code: Glutamate 5-kinase (367 aa).

ATP is bound at residue K10. Positions 50, 137, and 149 each coordinate substrate. Residues T169–D170 and T211–K217 each bind ATP. Residues A275–E353 enclose the PUA domain.

This sequence belongs to the glutamate 5-kinase family.

It localises to the cytoplasm. It catalyses the reaction L-glutamate + ATP = L-glutamyl 5-phosphate + ADP. Its pathway is amino-acid biosynthesis; L-proline biosynthesis; L-glutamate 5-semialdehyde from L-glutamate: step 1/2. Its function is as follows. Catalyzes the transfer of a phosphate group to glutamate to form L-glutamate 5-phosphate. This Pectobacterium carotovorum subsp. carotovorum (strain PC1) protein is Glutamate 5-kinase.